The primary structure comprises 212 residues: uncharacterized protein (212 aa).

Positions 53 and 74 each coordinate S-adenosyl-L-methionine.

The protein belongs to the methyltransferase superfamily. YrrT family.

Functionally, could be a S-adenosyl-L-methionine-dependent methyltransferase. This is an uncharacterized protein from Exiguobacterium sibiricum (strain DSM 17290 / CCUG 55495 / CIP 109462 / JCM 13490 / 255-15).